Here is a 229-residue protein sequence, read N- to C-terminus: Flagellar L-ring protein (229 aa).

Residues 1-25 form the signal peptide; that stretch reads MKQVRLLPSAPVRAVCALAVAALAG. C26 is lipidated: N-palmitoyl cysteine. C26 carries S-diacylglycerol cysteine lipidation.

The protein belongs to the FlgH family. In terms of assembly, the basal body constitutes a major portion of the flagellar organelle and consists of four rings (L,P,S, and M) mounted on a central rod.

It localises to the cell outer membrane. Its subcellular location is the bacterial flagellum basal body. Functionally, assembles around the rod to form the L-ring and probably protects the motor/basal body from shearing forces during rotation. This is Flagellar L-ring protein from Burkholderia ambifaria (strain MC40-6).